A 157-amino-acid polypeptide reads, in one-letter code: Cyclic pyranopterin monophosphate synthase (157 aa).

Residues 74–76 (MCH) and 112–113 (ME) contribute to the substrate site. Aspartate 127 is a catalytic residue.

Belongs to the MoaC family. In terms of assembly, homohexamer; trimer of dimers.

It catalyses the reaction (8S)-3',8-cyclo-7,8-dihydroguanosine 5'-triphosphate = cyclic pyranopterin phosphate + diphosphate. The protein operates within cofactor biosynthesis; molybdopterin biosynthesis. In terms of biological role, catalyzes the conversion of (8S)-3',8-cyclo-7,8-dihydroguanosine 5'-triphosphate to cyclic pyranopterin monophosphate (cPMP). The protein is Cyclic pyranopterin monophosphate synthase of Syntrophomonas wolfei subsp. wolfei (strain DSM 2245B / Goettingen).